We begin with the raw amino-acid sequence, 656 residues long: Probable Xaa-Pro aminopeptidase P (656 aa).

Positions 453, 464, 562, and 576 each coordinate Mn(2+).

The protein belongs to the peptidase M24B family. It depends on Mn(2+) as a cofactor.

The enzyme catalyses Release of any N-terminal amino acid, including proline, that is linked to proline, even from a dipeptide or tripeptide.. Its function is as follows. Catalyzes the removal of a penultimate prolyl residue from the N-termini of peptides. This Pyrenophora teres f. teres (strain 0-1) (Barley net blotch fungus) protein is Probable Xaa-Pro aminopeptidase P (ampp).